The primary structure comprises 199 residues: Recombination protein RecR (199 aa).

A C4-type zinc finger spans residues 57 to 72 (CQSCRTFTEETYCPIC). Residues 81–176 (EVICVVETPA…TVSRIAHGVP (96 aa)) form the Toprim domain.

Belongs to the RecR family.

Its function is as follows. May play a role in DNA repair. It seems to be involved in an RecBC-independent recombinational process of DNA repair. It may act with RecF and RecO. The chain is Recombination protein RecR from Shewanella pealeana (strain ATCC 700345 / ANG-SQ1).